We begin with the raw amino-acid sequence, 572 residues long: E3 ubiquitin-protein ligase ZFP91 (572 aa).

The span at 1-12 shows a compositional bias: basic and acidic residues; it reads MPGETEEPRSPE. The interval 1–308 is disordered; sequence MPGETEEPRS…PRLPKRRKKP (308 aa). Residues 61–70 show a composition bias toward low complexity; it reads AAAAAAAAAA. Basic residues predominate over residues 72–85; that stretch reads SRRRKAEYPRRRRS. Residues serine 86 and serine 106 each carry the phosphoserine modification. Residues 122–131 are compositionally biased toward basic and acidic residues; that stretch reads LTTDKDPKEE. Residues 143-162 show a composition bias toward low complexity; it reads SITTTRASRSWRSSSRTSIS. Over residues 209–225 the composition is skewed to acidic residues; sequence SDEEEEEEEEMLISEEE. 2 stretches are compositionally biased toward basic and acidic residues: residues 226 to 247 and 254 to 271; these read IPFK…ETPK and KVKE…VEVE. A compositionally biased stretch (acidic residues) spans 272-284; sequence VKEEENEIREDEE. 5 C2H2-type zinc fingers span residues 313–338, 344–368, 374–396, 402–424, and 432–455; these read VRCE…KYQH, YVCP…AKHH, YICE…RMIH, LQCE…MKKH, and FSCN…AKSH. An interaction with MAP3K14/NIK region spans residues 340-370; that stretch reads LKKKYVCPHPSCGRLFRLQKQLLRHAKHHTD.

This sequence belongs to the krueppel C2H2-type zinc-finger protein family. Interacts with MAP3K14/NIK. Found in all the examined tissues including brain, heart, kidney, lung, liver, spleen, thymus, skeletal muscle, ovary and testis.

The protein resides in the nucleus. It carries out the reaction S-ubiquitinyl-[E2 ubiquitin-conjugating enzyme]-L-cysteine + [acceptor protein]-L-lysine = [E2 ubiquitin-conjugating enzyme]-L-cysteine + N(6)-ubiquitinyl-[acceptor protein]-L-lysine.. It participates in protein modification; protein ubiquitination. Its function is as follows. Atypical E3 ubiquitin-protein ligase that mediates 'Lys-63'-linked ubiquitination of MAP3K14/NIK, leading to stabilize and activate MAP3K14/NIK. It thereby acts as an activator of the non-canonical NF-kappa-B2/NFKB2 pathway. May also play an important role in cell proliferation and/or anti-apoptosis. This is E3 ubiquitin-protein ligase ZFP91 (Zfp91) from Mus musculus (Mouse).